Consider the following 624-residue polypeptide: Probable potassium transport system protein Kup (624 aa).

Transmembrane regions (helical) follow at residues 16-36 (ALLT…SPLY), 59-79 (IISM…VMLV), 106-126 (FVAV…VITP), 147-167 (FILP…PLGT), 174-194 (FGPI…PQII), 211-231 (LIVA…LTVT), 252-272 (WFCV…ALVI), 292-312 (IPLV…VISG), 342-362 (IYMP…VLVF), 371-391 (AYGL…LIYV), 394-414 (TWWK…LLFA), and 418-438 (TKIH…IVVM).

It belongs to the HAK/KUP transporter (TC 2.A.72) family.

The protein localises to the cell membrane. It carries out the reaction K(+)(in) + H(+)(in) = K(+)(out) + H(+)(out). In terms of biological role, transport of potassium into the cell. Likely operates as a K(+):H(+) symporter. The polypeptide is Probable potassium transport system protein Kup (Corynebacterium glutamicum (strain ATCC 13032 / DSM 20300 / JCM 1318 / BCRC 11384 / CCUG 27702 / LMG 3730 / NBRC 12168 / NCIMB 10025 / NRRL B-2784 / 534)).